Consider the following 484-residue polypeptide: MPSLEAVEAFLVMNESELLQDFLVGLIAAPQLAVFFEKYPRLRKIIDREWPGWQRRLRKRIHDTNVPDDLAQEFTLYQHQLLLGSGEFFRRLPATLAALDSQGSPFSHKAHQLCPDGKITHSDSFHTLFLQQWRLSLVARTLTLHHQVMEQEREMLQQELQQRMQLSGALEPVLVENENAAGRLWDMSRAPTHHGDYQLLVQYGDFLAGQPELLQLAERLGRSRAADPQDHADTQLEIRRVLVREPAVMPEEVSGIHQSDEILRLMPSELSLLGLSELELEFYRRLLEKRLMTYRLQGDAWREQQIQHRVTYRHHQQQPKGPFIVCVDTSGSMGGFHEQCAKAFCLALMRIALADNRRCYIMLFSTAIVQYELTADSGIDQAIRFLSQRFRGGTDLARCLAQTCTLLQQPTWQQADAVVISDFIAQRLPEETQGLINQLQKQDGHCFHAVAMSPHGKPSIMKVFDYIWRFDSGIKGRLLRRWRH.

This sequence belongs to the ViaA family. In terms of assembly, homodimer. Interacts with RavA.

It is found in the cytoplasm. In terms of biological role, component of the RavA-ViaA chaperone complex, which may act on the membrane to optimize the function of some of the respiratory chains. ViaA stimulates the ATPase activity of RavA. The polypeptide is Regulatory protein ViaA (Edwardsiella ictaluri (strain 93-146)).